We begin with the raw amino-acid sequence, 520 residues long: Laccase-1 (520 aa).

The first 21 residues, 1 to 21, serve as a signal peptide directing secretion; it reads MSRFHSLLAFVVASLTAVAHA. Plastocyanin-like domains follow at residues 23 to 148 and 160 to 302; these read IGPV…FVVY and VDND…ILRY. Residues Asn72 and Asn75 are each glycosylated (N-linked (GlcNAc...) asparagine). Cu cation is bound by residues His85, His87, His130, and His132. 2 disulfides stabilise this stretch: Cys106-Cys509 and Cys138-Cys226. N-linked (GlcNAc...) asparagine glycans are attached at residues Asn229, Asn238, Asn354, and Asn361. The region spanning 369–491 is the Plastocyanin-like 3 domain; it reads TVPVLLQIIS…AGFAVVFAED (123 aa). Cu cation contacts are provided by His416, His419, His421, His473, Cys474, His475, and His479.

This sequence belongs to the multicopper oxidase family. As to quaternary structure, homodimer. Requires Cu cation as cofactor.

It localises to the secreted. The catalysed reaction is 4 hydroquinone + O2 = 4 benzosemiquinone + 2 H2O. Functionally, lignin degradation and detoxification of lignin-derived products. The chain is Laccase-1 from Trametes villosa (White-rot fungus).